An 885-amino-acid polypeptide reads, in one-letter code: Phycobiliprotein ApcE (885 aa).

Position 185 (C185) interacts with (2R,3E)-phycocyanobilin. PBS-linker domains lie at 242–422 (DVQG…FRKV), 498–680 (KSIG…NSKK), and 694–871 (NSIQ…KQSS).

This sequence belongs to the phycobilisome linker protein family. Contains one covalently linked bilin chromophore. This protein autochromophorylates (Potential).

It localises to the plastid. It is found in the chloroplast thylakoid membrane. This protein is postulated to act both as terminal energy acceptor and as a linker polypeptide that stabilizes the phycobilisome architecture. May have intrinsic bilin lyase activity. This is Phycobiliprotein ApcE (apcE) from Aglaothamnion neglectum (Red alga).